We begin with the raw amino-acid sequence, 367 residues long: CCCH-type zinc finger protein moe-3 (367 aa).

Residues 1–15 show a composition bias toward basic and acidic residues; it reads MSKVKGDLEKSDKRP. The interval 1–57 is disordered; that stretch reads MSKVKGDLEKSDKRPPSSMSTGSADSGVFSSGVHASSPSHSQGSSSQSGPPSPTTQL. Low complexity predominate over residues 30–49; sequence SSGVHASSPSHSQGSSSQSG. Residues 63–92 are a coiled coil; that stretch reads ETANLIAVNEQLRKEIAENKQIQTNQMRAL. The disordered stretch occupies residues 107 to 126; that stretch reads SISPHHGFPQRPPRGERRMQ. C3H1-type zinc fingers lie at residues 130 to 158 and 172 to 200; these read SYKTVICQAWLESKTCTFAENCRFAHGEE and KYKTKLCDKYTTTGLCPYGKRCLFIHPDN. A disordered region spans residues 235–268; sequence NTRNSYNQQPPPMGGLEMQSSPMKSSSDSSHMRS. The span at 252–268 shows a compositional bias: low complexity; it reads MQSSPMKSSSDSSHMRS.

As to expression, exclusively expressed in the hermaphrodite gonad. Weakly distributed throughout gonadal oocytes from the mitotic stage to the developing diakinesis stage, with expression restricted to the distal region of the gonad.

Functionally, zinc-finger protein that may play a role in oocyte maturation and fertility. The polypeptide is CCCH-type zinc finger protein moe-3 (Caenorhabditis elegans).